The primary structure comprises 463 residues: tRNA dimethylallyltransferase 9 (463 aa).

An ATP-binding site is contributed by 57 to 64 (GPTGAGKS). 59–64 (TGAGKS) contributes to the substrate binding site. Positions 82-85 (DSVQ) are interaction with substrate tRNA.

Belongs to the IPP transferase family. Requires Mg(2+) as cofactor. As to expression, expressed ubiquitously, with highest expression in proliferating tissues.

The protein resides in the cytoplasm. It carries out the reaction adenosine(37) in tRNA + dimethylallyl diphosphate = N(6)-dimethylallyladenosine(37) in tRNA + diphosphate. In terms of biological role, catalyzes the transfer of a dimethylallyl group onto the adenine at position 37 in tRNAs that read codons beginning with uridine, leading to the formation of N6-(dimethylallyl)adenosine (i(6)A). Involved in the cis-type cytokinin biosynthesis. In Arabidopsis thaliana (Mouse-ear cress), this protein is tRNA dimethylallyltransferase 9 (IPT9).